Reading from the N-terminus, the 323-residue chain is NADH-ubiquinone oxidoreductase chain 1 (323 aa).

8 helical membrane-spanning segments follow: residues 8–28 (VINPLAYIVPVLLAVAFLTLL), 74–94 (FLFLATPMLALTLALTLWAPM), 105–125 (LGVLFVLALSSLAVYSILGSG), 145–165 (ISYEVSLGLILLSVIIITGGF), 176–196 (SIWLLVPAWPLAAMWYISTLA), 236–256 (ILLMNTLSAVLFLGASHIPAF), 258–278 (ELTALNLMTKAALLSVVFLWV), and 298–318 (FLPLTLALVLWHLALPIALAG).

This sequence belongs to the complex I subunit 1 family.

The protein localises to the mitochondrion inner membrane. It catalyses the reaction a ubiquinone + NADH + 5 H(+)(in) = a ubiquinol + NAD(+) + 4 H(+)(out). Functionally, core subunit of the mitochondrial membrane respiratory chain NADH dehydrogenase (Complex I) that is believed to belong to the minimal assembly required for catalysis. Complex I functions in the transfer of electrons from NADH to the respiratory chain. The immediate electron acceptor for the enzyme is believed to be ubiquinone. This is NADH-ubiquinone oxidoreductase chain 1 (MT-ND1) from Oncorhynchus mykiss (Rainbow trout).